A 98-amino-acid polypeptide reads, in one-letter code: Large ribosomal subunit protein uL23 (98 aa).

Belongs to the universal ribosomal protein uL23 family. In terms of assembly, part of the 50S ribosomal subunit. Contacts protein L29, and trigger factor when it is bound to the ribosome.

Functionally, one of the early assembly proteins it binds 23S rRNA. One of the proteins that surrounds the polypeptide exit tunnel on the outside of the ribosome. Forms the main docking site for trigger factor binding to the ribosome. The protein is Large ribosomal subunit protein uL23 of Legionella pneumophila (strain Paris).